Reading from the N-terminus, the 110-residue chain is Endoribonuclease SymE (110 aa).

In terms of domain architecture, SpoVT-AbrB spans 29 to 74 (SSYPEYTRIPAITLKGQWLEDAGFTTGTQVDVRVMNGCIVLTAQQP).

The protein belongs to the SymE family.

Its subcellular location is the cytoplasm. Its function is as follows. Involved in the degradation and recycling of damaged RNA. It is itself a target for degradation by the ATP-dependent protease Lon. This is Endoribonuclease SymE from Salmonella choleraesuis (strain SC-B67).